We begin with the raw amino-acid sequence, 255 residues long: Testis-specific H1 histone (255 aa).

Residues 1 to 54 (MEQALTGEAQSRWPRRGGSGAMAEAPGPSGESRGHSATQLPAEKTVGGPSRGCS) form a disordered region. At S56 the chain carries Phosphoserine. Basic residues predominate over residues 124-134 (KVPKPRRKPGR). Residues 124–255 (KVPKPRRKPG…PKKPAQRTIQ (132 aa)) are disordered. Residues 142-152 (RAPWRTPAAPR) are compositionally biased toward low complexity. Composition is skewed to basic residues over residues 153–166 (SSRR…KAAR) and 174–194 (RNAR…RARP). 2 stretches are compositionally biased toward basic and acidic residues: residues 195–230 (RAKE…PRSG) and 238–248 (KPREEKQEPKK).

It belongs to the histone H1/H5 family. As to expression, testis-specific.

Its subcellular location is the nucleus. It localises to the chromosome. Essential for normal spermatogenesis and male fertility. Required for proper cell restructuring and DNA condensation during the elongation phase of spermiogenesis. Involved in the histone-protamine transition of sperm chromatin and the subsequent production of functional sperm. Binds both double-stranded and single-stranded DNA, ATP and protamine-1. This Homo sapiens (Human) protein is Testis-specific H1 histone.